The primary structure comprises 359 residues: Photosystem II protein D1 3 (359 aa).

3 helical membrane-spanning segments follow: residues 29-46, 118-133, and 142-156; these read YVGW…AATI, HFLI…EWEL, and WICV…AASA. Chlorophyll a is bound at residue His118. Tyr126 is a pheophytin a binding site. [CaMn4O5] cluster is bound by residues Asp170 and Glu189. The chain crosses the membrane as a helical span at residues 197-218; it reads FHMLGVAGVFGGSLFSAMHGSL. Residue His198 participates in chlorophyll a binding. Residues His215 and 264 to 265 contribute to the a quinone site; that span reads SF. His215 is a Fe cation binding site. Residue His272 participates in Fe cation binding. A helical transmembrane segment spans residues 274-288; the sequence is FLAAWPVVGIWFTAL. His332, Glu333, Asp342, and Ala344 together coordinate [CaMn4O5] cluster. Positions 345-359 are excised as a propeptide; the sequence is AAESTPVALQVPAIG.

This sequence belongs to the reaction center PufL/M/PsbA/D family. As to quaternary structure, PSII is composed of 1 copy each of membrane proteins PsbA, PsbB, PsbC, PsbD, PsbE, PsbF, PsbH, PsbI, PsbJ, PsbK, PsbL, PsbM, PsbT, PsbX, PsbY, PsbZ, Psb30/Ycf12, peripheral proteins PsbO, CyanoQ (PsbQ), PsbU, PsbV and a large number of cofactors. It forms dimeric complexes. Requires The D1/D2 heterodimer binds P680, chlorophylls that are the primary electron donor of PSII, and subsequent electron acceptors. It shares a non-heme iron and each subunit binds pheophytin, quinone, additional chlorophylls, carotenoids and lipids. D1 provides most of the ligands for the Mn4-Ca-O5 cluster of the oxygen-evolving complex (OEC). There is also a Cl(-1) ion associated with D1 and D2, which is required for oxygen evolution. The PSII complex binds additional chlorophylls, carotenoids and specific lipids. as cofactor. In terms of processing, tyr-161 forms a radical intermediate that is referred to as redox-active TyrZ, YZ or Y-Z. Post-translationally, C-terminally processed by CtpA; processing is essential to allow assembly of the oxygen-evolving complex and thus photosynthetic growth.

It localises to the cellular thylakoid membrane. It catalyses the reaction 2 a plastoquinone + 4 hnu + 2 H2O = 2 a plastoquinol + O2. Photosystem II (PSII) is a light-driven water:plastoquinone oxidoreductase that uses light energy to abstract electrons from H(2)O, generating O(2) and a proton gradient subsequently used for ATP formation. It consists of a core antenna complex that captures photons, and an electron transfer chain that converts photonic excitation into a charge separation. The D1/D2 (PsbA/PsbD) reaction center heterodimer binds P680, the primary electron donor of PSII as well as several subsequent electron acceptors. The sequence is that of Photosystem II protein D1 3 from Parasynechococcus marenigrum (strain WH8102).